A 225-amino-acid chain; its full sequence is uncharacterized protein (225 aa).

N-linked (GlcNAc...) asparagine; by host glycosylation is found at Asn-48, Asn-58, Asn-105, and Asn-108. The helical transmembrane segment at 156 to 178 (LWGYLKQPLVMVGIAAVVGYLIY) threads the bilayer.

The protein belongs to the ascovirus HvAv ORF58 family.

The protein localises to the membrane. This is an uncharacterized protein from Heliothis virescens ascovirus 3e (HvAV-3e).